The chain runs to 350 residues: Holliday junction branch migration complex subunit RuvB (350 aa).

The segment at 1–186 is large ATPase domain (RuvB-L); the sequence is MAGHEEEDER…FGIPLRLDFY (186 aa). Residues Leu-25, Arg-26, Gly-67, Lys-70, Thr-71, Thr-72, 133-135, Arg-176, Tyr-186, and Arg-223 contribute to the ATP site; that span reads EDF. Position 71 (Thr-71) interacts with Mg(2+). Residues 187 to 257 form a small ATPAse domain (RuvB-S) region; that stretch reads ETDELVQIVT…IADAALNRLE (71 aa). Positions 260 to 350 are head domain (RuvB-H); sequence GRGLDAMDRR…VQPDLWSDAP (91 aa). The DNA site is built by Arg-296, Arg-315, and Arg-320.

This sequence belongs to the RuvB family. In terms of assembly, homohexamer. Forms an RuvA(8)-RuvB(12)-Holliday junction (HJ) complex. HJ DNA is sandwiched between 2 RuvA tetramers; dsDNA enters through RuvA and exits via RuvB. An RuvB hexamer assembles on each DNA strand where it exits the tetramer. Each RuvB hexamer is contacted by two RuvA subunits (via domain III) on 2 adjacent RuvB subunits; this complex drives branch migration. In the full resolvosome a probable DNA-RuvA(4)-RuvB(12)-RuvC(2) complex forms which resolves the HJ.

The protein resides in the cytoplasm. The enzyme catalyses ATP + H2O = ADP + phosphate + H(+). In terms of biological role, the RuvA-RuvB-RuvC complex processes Holliday junction (HJ) DNA during genetic recombination and DNA repair, while the RuvA-RuvB complex plays an important role in the rescue of blocked DNA replication forks via replication fork reversal (RFR). RuvA specifically binds to HJ cruciform DNA, conferring on it an open structure. The RuvB hexamer acts as an ATP-dependent pump, pulling dsDNA into and through the RuvAB complex. RuvB forms 2 homohexamers on either side of HJ DNA bound by 1 or 2 RuvA tetramers; 4 subunits per hexamer contact DNA at a time. Coordinated motions by a converter formed by DNA-disengaged RuvB subunits stimulates ATP hydrolysis and nucleotide exchange. Immobilization of the converter enables RuvB to convert the ATP-contained energy into a lever motion, pulling 2 nucleotides of DNA out of the RuvA tetramer per ATP hydrolyzed, thus driving DNA branch migration. The RuvB motors rotate together with the DNA substrate, which together with the progressing nucleotide cycle form the mechanistic basis for DNA recombination by continuous HJ branch migration. Branch migration allows RuvC to scan DNA until it finds its consensus sequence, where it cleaves and resolves cruciform DNA. The chain is Holliday junction branch migration complex subunit RuvB from Rhodospirillum rubrum (strain ATCC 11170 / ATH 1.1.1 / DSM 467 / LMG 4362 / NCIMB 8255 / S1).